The primary structure comprises 341 residues: Methionine import ATP-binding protein MetN 3 (341 aa).

Positions I2–V241 constitute an ABC transporter domain. G38–S45 provides a ligand contact to ATP.

Belongs to the ABC transporter superfamily. Methionine importer (TC 3.A.1.24) family. In terms of assembly, the complex is composed of two ATP-binding proteins (MetN), two transmembrane proteins (MetI) and a solute-binding protein (MetQ).

The protein resides in the cell membrane. The catalysed reaction is L-methionine(out) + ATP + H2O = L-methionine(in) + ADP + phosphate + H(+). It catalyses the reaction D-methionine(out) + ATP + H2O = D-methionine(in) + ADP + phosphate + H(+). Part of the ABC transporter complex MetNIQ involved in methionine import. Responsible for energy coupling to the transport system. This chain is Methionine import ATP-binding protein MetN 3, found in Bacillus anthracis.